Consider the following 554-residue polypeptide: Valerianol synthase TPS1G (554 aa).

Mg(2+)-binding residues include D307 and D311. The DDXXD motif signature appears at 326-330 (VQRWD). Positions 452, 456, and 460 each coordinate Mg(2+).

Belongs to the terpene synthase family. Mg(2+) is required as a cofactor.

The enzyme catalyses (2E,6E)-farnesyl diphosphate + H2O = valerianol + diphosphate. It participates in secondary metabolite biosynthesis; terpenoid biosynthesis. Terpene synthase that catalyzes the biosynthesis of the terpene valerianol, which is a volatile compound of floral scent. In Camellia hiemalis (Camellia), this protein is Valerianol synthase TPS1G.